We begin with the raw amino-acid sequence, 508 residues long: Photosystem II CP47 reaction center protein (508 aa).

A run of 6 helical transmembrane segments spans residues 21–36, 101–115, 140–156, 203–218, 237–252, and 457–472; these read SVHIMHTALVAGWAGS, IVFSGLCFLAAIWHW, GIHLFLAGVACFGFGAF, IAAGTLGILAGLFHLS, VLSSSIAAVFFAAFVV, and SFALLFFFGHIWHGAR.

It belongs to the PsbB/PsbC family. PsbB subfamily. PSII is composed of 1 copy each of membrane proteins PsbA, PsbB, PsbC, PsbD, PsbE, PsbF, PsbH, PsbI, PsbJ, PsbK, PsbL, PsbM, PsbT, PsbX, PsbY, PsbZ, Psb30/Ycf12, at least 3 peripheral proteins of the oxygen-evolving complex and a large number of cofactors. It forms dimeric complexes. It depends on Binds multiple chlorophylls. PSII binds additional chlorophylls, carotenoids and specific lipids. as a cofactor.

It localises to the plastid. Its subcellular location is the chloroplast thylakoid membrane. One of the components of the core complex of photosystem II (PSII). It binds chlorophyll and helps catalyze the primary light-induced photochemical processes of PSII. PSII is a light-driven water:plastoquinone oxidoreductase, using light energy to abstract electrons from H(2)O, generating O(2) and a proton gradient subsequently used for ATP formation. This chain is Photosystem II CP47 reaction center protein, found in Lactuca sativa (Garden lettuce).